The sequence spans 369 residues: Opsin Rh6 (369 aa).

Residues 1–46 (MASLHPPSFAYMRDGRNLSLAESVPAEIMHMVDPYWYQWPPLEPMW) are Extracellular-facing. The N-linked (GlcNAc...) asparagine glycan is linked to N17. Residues 47 to 71 (FGIIGFVIAILGTMSLAGNFIVMYI) form a helical membrane-spanning segment. The Cytoplasmic segment spans residues 72–83 (FTSSKGLRTPSN). A helical transmembrane segment spans residues 84–109 (MFVVNLAFSDFMMMFTMFPPVVLNGF). Residues 110–123 (YGTWIMGPFLCELY) are Extracellular-facing. Cysteines 120 and 197 form a disulfide. The chain crosses the membrane as a helical span at residues 124–143 (GMFGSLFGCVSIWSMTLIAY). Residues 144-162 (DRYCVIVKGMARKPLTATA) are Cytoplasmic-facing. Residues 163-186 (AVLRLMVVWTICGAWALMPLFGWN) traverse the membrane as a helical segment. At 187-210 (RYVPEGNMTACGTDYFAKDWWNRS) the chain is on the extracellular side. N193 and N208 each carry an N-linked (GlcNAc...) asparagine glycan. The helical transmembrane segment at 211–238 (YIIVYSLWVYLTPLLTIIFSYWHIMKAV) threads the bilayer. Residues 239–274 (AAHEKAMREQAKKMNVASLRNSEADKSKAIEIKLAK) lie on the Cytoplasmic side of the membrane. A helical transmembrane segment spans residues 275-298 (VALTTISLWFFAWTPYTIINYAGI). The Extracellular portion of the chain corresponds to 299–305 (FESMHLS). Residues 306-330 (PLSTICGSVFAKANAVCNPIVYGLS) form a helical membrane-spanning segment. N6-(retinylidene)lysine is present on K317. Over 331-369 (HPKYKQVLREKMPCLACGKDDLTSDSRTQATAEISESQA) the chain is Cytoplasmic.

The protein belongs to the G-protein coupled receptor 1 family. Opsin subfamily. Post-translationally, phosphorylated on some or all of the serine and threonine residues present in the C-terminal region. Each Drosophila eye is composed of 800 facets or ommatidia. Each ommatidium contains 8 photoreceptor cells (R1-R8), the R1 to R6 cells are outer cells, while R7 and R8 are inner cells. Rh6 is expressed in a subset of R8 cells, most likely expressed in the subset of R8 cells paired with Rh4-expressing R7 cells (R7y).

It is found in the membrane. Functionally, visual pigments are the light-absorbing molecules that mediate vision. They consist of an apoprotein, opsin, covalently linked to cis-retinal. This Drosophila melanogaster (Fruit fly) protein is Opsin Rh6 (Rh6).